Here is a 98-residue protein sequence, read N- to C-terminus: NADH-ubiquinone oxidoreductase chain 4L (98 aa).

Helical transmembrane passes span methionine 1–leucine 21 and proline 48–alanine 68.

It belongs to the complex I subunit 4L family. As to quaternary structure, core subunit of respiratory chain NADH dehydrogenase (Complex I) which is composed of 45 different subunits.

Its subcellular location is the mitochondrion inner membrane. The enzyme catalyses a ubiquinone + NADH + 5 H(+)(in) = a ubiquinol + NAD(+) + 4 H(+)(out). Its function is as follows. Core subunit of the mitochondrial membrane respiratory chain NADH dehydrogenase (Complex I) which catalyzes electron transfer from NADH through the respiratory chain, using ubiquinone as an electron acceptor. Part of the enzyme membrane arm which is embedded in the lipid bilayer and involved in proton translocation. The chain is NADH-ubiquinone oxidoreductase chain 4L (mt-nd4l) from Xenopus laevis (African clawed frog).